We begin with the raw amino-acid sequence, 259 residues long: Phosphatidate cytidylyltransferase (259 aa).

7 helical membrane-spanning segments follow: residues 31-51 (LVIF…CFAI), 69-89 (PLVL…IGLL), 103-123 (FFKS…LIKI), 129-149 (YYLL…YYIG), 170-190 (FLGG…YGIL), 193-213 (FLLG…KSFI), and 236-256 (FDAL…GELN).

It belongs to the CDS family.

Its subcellular location is the cell membrane. The catalysed reaction is a 1,2-diacyl-sn-glycero-3-phosphate + CTP + H(+) = a CDP-1,2-diacyl-sn-glycerol + diphosphate. The protein operates within phospholipid metabolism; CDP-diacylglycerol biosynthesis; CDP-diacylglycerol from sn-glycerol 3-phosphate: step 3/3. In Aquifex aeolicus (strain VF5), this protein is Phosphatidate cytidylyltransferase (cdsA).